We begin with the raw amino-acid sequence, 254 residues long: UPF0246 protein BDI_1226 (254 aa).

It belongs to the UPF0246 family.

The protein is UPF0246 protein BDI_1226 of Parabacteroides distasonis (strain ATCC 8503 / DSM 20701 / CIP 104284 / JCM 5825 / NCTC 11152).